The primary structure comprises 514 residues: Endoglucanase MaCel5A (514 aa).

Positions 1 to 23 (MKRILFTAGGCLFYLLLAVKAYA) are cleaved as a signal peptide. Composition is skewed to low complexity over residues 91–114 (GSSSSSSSSSSSSSGSSSSSSGSG) and 179–201 (SSSSSSGGTSSSGSSSSGVSSSG). Disordered stretches follow at residues 91-118 (GSSSSSSSSSSSSSGSSSSSSGSGSSSG) and 179-208 (SSSSSSGGTSSSGSSSSGVSSSGGSSGGDS). Glu346 functions as the Proton donor in the catalytic mechanism. Residue Glu439 is the Nucleophile of the active site.

The protein belongs to the glycosyl hydrolase 5 (cellulase A) family.

The catalysed reaction is Endohydrolysis of (1-&gt;4)-beta-D-glucosidic linkages in cellulose, lichenin and cereal beta-D-glucans.. With respect to regulation, exhibits strong halostability and halotolerance. The activity increases about tenfold in the presence of 0.5 M NaCl, and about fivefold in the presence of 4.0 M NaCl. Tolerates detergents, but activity is decreased in the presence of EDTA. Activity is enhanced in the presence of Mn(2+), Ca(2+), Ba(2+) or Mg(2+), and decreased in the presence of Zn(2+), Cu(2+), Al(3+) or Fe(3+). In terms of biological role, endoglucanase that exhibits highest activity toward barley beta-glucan, lower activity toward carboxymethyl cellulose (CMC-Na), and marginal activity toward laminarin and xylan. The polypeptide is Endoglucanase MaCel5A (Microbulbifer sp. (strain ALW1)).